Reading from the N-terminus, the 88-residue chain is Arminin 1b (88 aa).

The signal sequence occupies residues Met-1–Ala-18. A propeptide spanning residues Glu-19–Ala-57 is cleaved from the precursor. A Valine amide modification is found at Val-85.

The protein belongs to the arminin family. As to expression, expressed in entodermal epithelium along the body column.

It localises to the secreted. It is found in the target cell membrane. Its function is as follows. Antimicrobial peptide with a broad-spectrum antimicrobial activity. Keeps its antibacterial activity under a wide range of salt concentrations that mimic physiological conditions of human blood, which is surprising, since Hydra is an obligate freshwater animal with nearly no salt tolerance. Does not affect red blood cells. The polypeptide is Arminin 1b (Hydra vulgaris (Hydra)).